The chain runs to 485 residues: NADH-quinone oxidoreductase subunit N (485 aa).

The next 14 membrane-spanning stretches (helical) occupy residues 8–28 (LIAL…MLSI), 35–55 (FLNA…LWFV), 71–91 (GFAM…CTFA), 105–125 (FYLL…ANHL), 127–147 (ALFL…GYAF), 159–179 (YTIL…LVYA), 203–223 (LLAG…LVPF), 235–255 (PAPV…GVVM), 271–291 (VVLG…ALSQ), 297–317 (LLGY…IALQ), 326–346 (VGVY…VVSL), 373–393 (AAVM…LGFI), 408–430 (WWLV…RVAV), and 455–475 (IVVL…QPLI).

Belongs to the complex I subunit 2 family. As to quaternary structure, NDH-1 is composed of 13 different subunits. Subunits NuoA, H, J, K, L, M, N constitute the membrane sector of the complex.

It is found in the cell inner membrane. The catalysed reaction is a quinone + NADH + 5 H(+)(in) = a quinol + NAD(+) + 4 H(+)(out). NDH-1 shuttles electrons from NADH, via FMN and iron-sulfur (Fe-S) centers, to quinones in the respiratory chain. The immediate electron acceptor for the enzyme in this species is believed to be ubiquinone. Couples the redox reaction to proton translocation (for every two electrons transferred, four hydrogen ions are translocated across the cytoplasmic membrane), and thus conserves the redox energy in a proton gradient. This Salmonella arizonae (strain ATCC BAA-731 / CDC346-86 / RSK2980) protein is NADH-quinone oxidoreductase subunit N.